The sequence spans 82 residues: Large ribosomal subunit protein uL23 (82 aa).

It belongs to the universal ribosomal protein uL23 family. In terms of assembly, part of the 50S ribosomal subunit. Contacts protein L29.

In terms of biological role, binds to 23S rRNA. One of the proteins that surrounds the polypeptide exit tunnel on the outside of the ribosome. The polypeptide is Large ribosomal subunit protein uL23 (Picrophilus torridus (strain ATCC 700027 / DSM 9790 / JCM 10055 / NBRC 100828 / KAW 2/3)).